A 147-amino-acid chain; its full sequence is 3-dehydroquinate dehydratase (147 aa).

Tyrosine 24 functions as the Proton acceptor in the catalytic mechanism. Residues asparagine 74, histidine 80, and aspartate 87 each coordinate substrate. Histidine 100 serves as the catalytic Proton donor. Substrate contacts are provided by residues 101–102 (LS) and arginine 111.

The protein belongs to the type-II 3-dehydroquinase family. In terms of assembly, homododecamer.

It catalyses the reaction 3-dehydroquinate = 3-dehydroshikimate + H2O. The protein operates within metabolic intermediate biosynthesis; chorismate biosynthesis; chorismate from D-erythrose 4-phosphate and phosphoenolpyruvate: step 3/7. Catalyzes a trans-dehydration via an enolate intermediate. In Azorhizobium caulinodans (strain ATCC 43989 / DSM 5975 / JCM 20966 / LMG 6465 / NBRC 14845 / NCIMB 13405 / ORS 571), this protein is 3-dehydroquinate dehydratase.